The following is an 847-amino-acid chain: Beta-galactosidase 1 (847 aa).

The first 32 residues, 1–32, serve as a signal peptide directing secretion; it reads MGSKPNAMKNVVAMAAVSALFLLGFLVCSVSG. Glu190 (proton donor) is an active-site residue. Catalysis depends on Glu259, which acts as the Nucleophile. Residue Asn469 is glycosylated (N-linked (GlcNAc...) asparagine). The region spanning 761–847 is the SUEL-type lectin domain; that stretch reads KPLHPKAHLQ…KKLAVEAVCA (87 aa).

The protein belongs to the glycosyl hydrolase 35 family. As to expression, ubiquitous, at low levels.

The protein localises to the secreted. It is found in the extracellular space. The protein resides in the apoplast. The catalysed reaction is Hydrolysis of terminal non-reducing beta-D-galactose residues in beta-D-galactosides.. The protein is Beta-galactosidase 1 (BGAL1) of Arabidopsis thaliana (Mouse-ear cress).